Reading from the N-terminus, the 510-residue chain is 2,3-bisphosphoglycerate-independent phosphoglycerate mutase (510 aa).

Mn(2+) is bound by residues Asp-13 and Ser-63. Ser-63 serves as the catalytic Phosphoserine intermediate. Residues His-124, 154–155 (RD), Arg-186, Arg-192, 262–265 (RADR), and Lys-334 each bind substrate. The Mn(2+) site is built by Asp-401, His-405, Asp-442, His-443, and His-461.

This sequence belongs to the BPG-independent phosphoglycerate mutase family. As to quaternary structure, monomer. Requires Mn(2+) as cofactor.

It carries out the reaction (2R)-2-phosphoglycerate = (2R)-3-phosphoglycerate. It participates in carbohydrate degradation; glycolysis; pyruvate from D-glyceraldehyde 3-phosphate: step 3/5. In terms of biological role, catalyzes the interconversion of 2-phosphoglycerate and 3-phosphoglycerate. The sequence is that of 2,3-bisphosphoglycerate-independent phosphoglycerate mutase from Vibrio atlanticus (strain LGP32) (Vibrio splendidus (strain Mel32)).